The primary structure comprises 249 residues: ATP synthase subunit a (249 aa).

Transmembrane regions (helical) follow at residues 26 to 46 (FTNVSAFMVATVVLASGFLYL), 84 to 104 (FFPFVFSLFMFVLVANFIGLF), 114 to 134 (IIVTFALSLLVIGTVIFYGFF), 143 to 163 (LFVPSGVPGIIVPLVVLIEII), 185 to 205 (ITLKVFAGFVVSLSSLGALGI), and 208 to 228 (AVLPLLMTVAITALEFLVAFL).

Belongs to the ATPase A chain family. F-type ATPases have 2 components, CF(1) - the catalytic core - and CF(0) - the membrane proton channel. CF(1) has five subunits: alpha(3), beta(3), gamma(1), delta(1), epsilon(1). CF(0) has three main subunits: a(1), b(2) and c(9-12). The alpha and beta chains form an alternating ring which encloses part of the gamma chain. CF(1) is attached to CF(0) by a central stalk formed by the gamma and epsilon chains, while a peripheral stalk is formed by the delta and b chains.

Its subcellular location is the cell inner membrane. Its function is as follows. Key component of the proton channel; it plays a direct role in the translocation of protons across the membrane. The polypeptide is ATP synthase subunit a (Brucella canis (strain ATCC 23365 / NCTC 10854 / RM-666)).